We begin with the raw amino-acid sequence, 394 residues long: MGIKQLFSIIKDEAPAAIKEGDIKNQFGRKVAIDASMSIYSFLIAVRSDGQQLMNEAGETTSHLMGMFYRTLRMVDNGIKPLYVFDGAPPKLKSGELAKRFQRKQEATEGLEEAKETGTAEDVEKFSRRTVRVTREHNAECQKLLKLMGIPYIVAPTEAEAQCAVLARAGKVYAAASEDMDTLCFHTPILLRHLTFSEQRKEPIQEIHTDKVLEGLGMDRKQFVDLCILLGCDYLDPIPKVGPSTALKLIREHGTLEEVVEWMKADPKGRYQIPEDWPFEDARALFFEPDVRPADDPLCDFKWEKPDIEGLVQFLAHEKGFSEDRVRSASIKLQKNMQTSQQARIEGFFKVLPKTEEEKKAHKRKLEEQAEQKRKKVKEEKKEKAKLKAKPRGA.

The segment at 1–104 is N-domain; sequence MGIKQLFSII…GELAKRFQRK (104 aa). Residue Asp-34 coordinates Mg(2+). Residues Arg-47 and Arg-70 each coordinate DNA. Asp-86, Glu-158, Glu-160, Asp-179, and Asp-181 together coordinate Mg(2+). The interval 122–253 is I-domain; the sequence is DVEKFSRRTV…STALKLIREH (132 aa). Glu-158 contributes to the DNA binding site. 2 residues coordinate DNA: Gly-231 and Asp-233. A Mg(2+)-binding site is contributed by Asp-233. The interaction with PCNA stretch occupies residues 341–349; the sequence is QQARIEGFF. The span at 356–383 shows a compositional bias: basic and acidic residues; that stretch reads EEEKKAHKRKLEEQAEQKRKKVKEEKKE. The segment at 356-394 is disordered; the sequence is EEEKKAHKRKLEEQAEQKRKKVKEEKKEKAKLKAKPRGA. Over residues 384–394 the composition is skewed to basic residues; the sequence is KAKLKAKPRGA.

This sequence belongs to the XPG/RAD2 endonuclease family. FEN1 subfamily. In terms of assembly, interacts with PCNA. Three molecules of FEN1 bind to one PCNA trimer with each molecule binding to one PCNA monomer. PCNA stimulates the nuclease activity without altering cleavage specificity. Mg(2+) serves as cofactor. In terms of processing, phosphorylated. Phosphorylation upon DNA damage induces relocalization to the nuclear plasma.

It is found in the nucleus. The protein localises to the nucleolus. Its subcellular location is the nucleoplasm. The protein resides in the mitochondrion. Its function is as follows. Structure-specific nuclease with 5'-flap endonuclease and 5'-3' exonuclease activities involved in DNA replication and repair. During DNA replication, cleaves the 5'-overhanging flap structure that is generated by displacement synthesis when DNA polymerase encounters the 5'-end of a downstream Okazaki fragment. It enters the flap from the 5'-end and then tracks to cleave the flap base, leaving a nick for ligation. Also involved in the long patch base excision repair (LP-BER) pathway, by cleaving within the apurinic/apyrimidinic (AP) site-terminated flap. Acts as a genome stabilization factor that prevents flaps from equilibrating into structures that lead to duplications and deletions. Also possesses 5'-3' exonuclease activity on nicked or gapped double-stranded DNA, and exhibits RNase H activity. Also involved in replication and repair of rDNA and in repairing mitochondrial DNA. The chain is Flap endonuclease 1 from Sordaria macrospora (strain ATCC MYA-333 / DSM 997 / K(L3346) / K-hell).